The primary structure comprises 220 residues: Sugar transporter SWEET1 (220 aa).

The next 7 helical transmembrane spans lie at 9 to 29 (LMTF…IMPL), 44 to 64 (VAGL…SYAL), 70 to 90 (TMLF…FNYW), 106 to 126 (VMIA…NTVD), 138 to 158 (LSSV…AIVI), 167 to 187 (IINV…FGLL), and 191 to 211 (IYIY…LTLI). The MtN3/slv 1 domain occupies 12 to 92 (FIQFCATFIT…IYYVFNYWKN (81 aa)). The MtN3/slv 2 domain occupies 134 to 217 (RLGFLSSVVC…LTLIKLYPPQ (84 aa)).

Belongs to the SWEET sugar transporter family.

It is found in the golgi apparatus membrane. The protein localises to the cell membrane. Functionally, mediates both low-affinity uptake and efflux of sugar across the membrane. The polypeptide is Sugar transporter SWEET1 (slc50a1) (Dictyostelium discoideum (Social amoeba)).